We begin with the raw amino-acid sequence, 177 residues long: MSRIGKKPVTVPSGVTATVDGQTVKMKGPKGQLQFIVHDDVDVKFENGQVRVAPRSETKRARSLYGTARAQIANLVEGVTKGFEKKLEITGVGYRAAMQGKNLQLALGYSHDVVYQIPEGITIAVPKPTEITVTGIDPQRVGQVAAEIRAYRPPEPYKGKGVKYAGEFIFRKEGKKK.

Belongs to the universal ribosomal protein uL6 family. As to quaternary structure, part of the 50S ribosomal subunit.

Functionally, this protein binds to the 23S rRNA, and is important in its secondary structure. It is located near the subunit interface in the base of the L7/L12 stalk, and near the tRNA binding site of the peptidyltransferase center. The sequence is that of Large ribosomal subunit protein uL6 from Bradyrhizobium sp. (strain BTAi1 / ATCC BAA-1182).